Here is a 188-residue protein sequence, read N- to C-terminus: UPF0301 protein MCA2336 2 (188 aa).

It belongs to the UPF0301 (AlgH) family.

The polypeptide is UPF0301 protein MCA2336 2 (Methylococcus capsulatus (strain ATCC 33009 / NCIMB 11132 / Bath)).